Reading from the N-terminus, the 711-residue chain is Nuclear intron maturase 1, mitochondrial (711 aa).

The Reverse transcriptase domain maps to 147-459 (KDKISMNGGE…RGIQFLDHII (313 aa)). An intron maturase type-2 region spans residues 484–653 (GTLLSVSASL…QVLQEYIRLQ (170 aa)).

It belongs to the plant nuclear intron maturase (nMat) family. As to expression, expressed at low levels in seedlings and accumulates in adult plants.

It localises to the mitochondrion. Functionally, nuclear-encoded maturase required for splicing of group-II introns in mitochondria. Necessary for mitochondrial biogenesis during early developmental stages. Involved in the splicing of mitochondrial NAD4 transcripts. Required for trans-splicing of NAD1 intron 1 and also functions in cis-splicing of NAD2 intron 1 and NAD4 intron 2. Required for the regulation of fundamental metabolic pathways such as amino acid metabolism, triacylglycerol degradation and polysaccharide synthesis (cellulose and starch) during the early stage of plant growth. Implicated in stress responses. The sequence is that of Nuclear intron maturase 1, mitochondrial from Arabidopsis thaliana (Mouse-ear cress).